Consider the following 87-residue polypeptide: RNA-binding protein Hfq (87 aa).

Residues 9-68 enclose the Sm domain; that stretch reads DPFLNALRRERIPVSIFLVNGIKLQGKIQSFDQFVILLENTVNQMVYKHAISTVVPARAV.

The protein belongs to the Hfq family. As to quaternary structure, homohexamer.

RNA chaperone that binds small regulatory RNA (sRNAs) and mRNAs to facilitate mRNA translational regulation in response to envelope stress, environmental stress and changes in metabolite concentrations. Also binds with high specificity to tRNAs. This chain is RNA-binding protein Hfq, found in Pseudoalteromonas translucida (strain TAC 125).